We begin with the raw amino-acid sequence, 189 residues long: Guanylate kinase (189 aa).

The region spanning 8 to 186 is the Guanylate kinase-like domain; that stretch reads GKLTVITGPS…AVIELESLMG (179 aa). 15–22 is a binding site for ATP; sequence GPSGVGKG.

It belongs to the guanylate kinase family.

It is found in the cytoplasm. The enzyme catalyses GMP + ATP = GDP + ADP. Essential for recycling GMP and indirectly, cGMP. The polypeptide is Guanylate kinase (Prochlorococcus marinus (strain MIT 9313)).